The chain runs to 354 residues: Protein RecA (354 aa).

Residue 67 to 74 (GPESSGKT) participates in ATP binding.

This sequence belongs to the RecA family.

The protein resides in the cytoplasm. Its function is as follows. Can catalyze the hydrolysis of ATP in the presence of single-stranded DNA, the ATP-dependent uptake of single-stranded DNA by duplex DNA, and the ATP-dependent hybridization of homologous single-stranded DNAs. It interacts with LexA causing its activation and leading to its autocatalytic cleavage. The chain is Protein RecA from Haemophilus influenzae (strain 86-028NP).